The sequence spans 106 residues: ATP-dependent Clp protease adapter protein ClpS (106 aa).

This sequence belongs to the ClpS family. As to quaternary structure, binds to the N-terminal domain of the chaperone ClpA.

Involved in the modulation of the specificity of the ClpAP-mediated ATP-dependent protein degradation. This chain is ATP-dependent Clp protease adapter protein ClpS, found in Serratia proteamaculans (strain 568).